The chain runs to 306 residues: Protein-L-isoaspartate O-methyltransferase 2 (306 aa).

The segment at 1–82 is disordered; it reads MSTTPPRNKF…ASAATAGGGG (82 aa). Positions 38-48 are enriched in pro residues; sequence PAAPTPAPAKP. Low complexity predominate over residues 54–77; sequence PRTAAPAPAPVPASAVEQRASAAT. Serine 142 is a catalytic residue.

The protein belongs to the methyltransferase superfamily. L-isoaspartyl/D-aspartyl protein methyltransferase family.

It is found in the cytoplasm. It catalyses the reaction [protein]-L-isoaspartate + S-adenosyl-L-methionine = [protein]-L-isoaspartate alpha-methyl ester + S-adenosyl-L-homocysteine. In terms of biological role, catalyzes the methyl esterification of L-isoaspartyl residues in peptides and proteins that result from spontaneous decomposition of normal L-aspartyl and L-asparaginyl residues. It plays a role in the repair and/or degradation of damaged proteins. The sequence is that of Protein-L-isoaspartate O-methyltransferase 2 from Cupriavidus necator (strain ATCC 17699 / DSM 428 / KCTC 22496 / NCIMB 10442 / H16 / Stanier 337) (Ralstonia eutropha).